The primary structure comprises 618 residues: Crinkler effector protein 16 (618 aa).

A signal peptide spans 1–19; it reads MVVVSLQCAIVGQAGSSFD. Positions 18–57 are LQLFLAK domain; it reads FDVEIDDGAKVSKLKDAIKAKKPNDFKVVDADKLHLFLAK. The interval 58–139 is DWL domain; the sequence is QPVEDESGKE…NMELPSSEQI (82 aa). The HVLVXXP motif signature appears at 140-146; that stretch reads HVLVVVP. Asn-534 carries N-linked (GlcNAc...) asparagine glycosylation.

Belongs to the Crinkler effector family.

It is found in the secreted. The protein resides in the host nucleus. Its function is as follows. Secreted effector that elicits necrosis in host plants, a characteristic of plant innate immunity. The polypeptide is Crinkler effector protein 16 (Phytophthora infestans (Potato late blight agent)).